The following is a 439-amino-acid chain: MDHLAHHYHAHIAELNRRVAEIVSREALSGLVIHSGQPHRMFLDDINYPFKANPHFKAWLPVLDNPNCWLVVNGRDKPQLIFYRPVDFWHKVSDVPEMFWTEHFEIKLLTKADKVAELLPSDITNWAYLGEHLDVAEVLGFTSRNPDSVMSYLHFHRTTKTEYELECMRRANQIAVQGHLAAKNAFYNGASEFEIQQQYLSAVGQGENEVPYGNIIALNQNAAILHYTALEHQNPARRLSFLIDAGASYFGYASDITRTYAFEKNRFDELITAMNKAQLELIDMMRPGVRYPDLHLATHGKVAQMLLDFELATGDAQGLVDQGITSAFFPHGLGHMLGLQVHDVGGFSFDERGTHIPAPEAHPFLRCTRILAPNQVLTMEPGLYIIDTLLNELKQDSRGQQINWRTVDELRPFGGIRIEDNVIVHQDRNENMTRELGLA.

Mn(2+) contacts are provided by D244, D255, H335, E380, and E419.

The protein belongs to the peptidase M24B family. Bacterial-type prolidase subfamily. It depends on Mn(2+) as a cofactor.

The enzyme catalyses Xaa-L-Pro dipeptide + H2O = an L-alpha-amino acid + L-proline. Its function is as follows. Splits dipeptides with a prolyl residue in the C-terminal position. This chain is Xaa-Pro dipeptidase, found in Shewanella sp. (strain ANA-3).